The chain runs to 849 residues: Protein translocase subunit SecA (849 aa).

Residues Gln-85, Gly-103 to Thr-107, and Asp-493 contribute to the ATP site. Residues Cys-832, Cys-834, Cys-843, and His-844 each coordinate Zn(2+).

This sequence belongs to the SecA family. Monomer and homodimer. Part of the essential Sec protein translocation apparatus which comprises SecA, SecYEG and auxiliary proteins SecDF. Other proteins may also be involved. It depends on Zn(2+) as a cofactor.

The protein resides in the cell membrane. Its subcellular location is the cytoplasm. The catalysed reaction is ATP + H2O + cellular proteinSide 1 = ADP + phosphate + cellular proteinSide 2.. Part of the Sec protein translocase complex. Interacts with the SecYEG preprotein conducting channel. Has a central role in coupling the hydrolysis of ATP to the transfer of proteins into and across the cell membrane, serving as an ATP-driven molecular motor driving the stepwise translocation of polypeptide chains across the membrane. This is Protein translocase subunit SecA from Streptococcus thermophilus (strain CNRZ 1066).